A 330-amino-acid polypeptide reads, in one-letter code: D-lactate dehydrogenase (330 aa).

NAD(+) contacts are provided by residues 155–156 (RI), Asp175, 206–207 (MP), Asn212, 233–235 (MAR), and Asp259. Arg235 is an active-site residue. Glu264 is a catalytic residue. Catalysis depends on His296, which acts as the Proton donor.

This sequence belongs to the D-isomer specific 2-hydroxyacid dehydrogenase family.

It catalyses the reaction (R)-lactate + NAD(+) = pyruvate + NADH + H(+). The polypeptide is D-lactate dehydrogenase (ldhD) (Streptococcus pyogenes serotype M1).